Here is a 565-residue protein sequence, read N- to C-terminus: MSEALERFIDQGIGRKPADIVLKGGRFFDLVTGELVASDIAISGDRIVGTCGDYEGREEIDVSGRIVVPGFIDTHLHIESSLVTPHEFDRCVLPLGITTAICDPHEIANVLGTEGIQFFLDSAMETIMDIRVQLSSCVPATHLETAGADLPIERLTPFRHHPKVIGLAEFMNFPGVIHKDPICLAKLDAFQGGHIDGHAPLLRGKELNGYLATGIRTDHECTSAEEALEKIRKGMHILVREGSVSKDLQALMPIITERLSPHLALCTDDRNPLDIAEQGHLDHMIRTAIAAGVEPLAIYRAASISAARAFGLSDRGLVAPGWRADLVVLDSLENCKAEMVFSGGRRVTDALFARRKPVEPVGLDSVKAREVKAADFGVPYSEVETSVIGVLPGKIITEHRRYRLPAVGNQTGPDLGRDIIKVAVIERHGVNGNHANGFVQGFGLKKGAIASTVGHDSHNICVVGVSEEDMALAANRLGAIKGGFVVVEDGRVTGEIALPIAGLMSLEPYERVRDILHHLRQAAFALGATLEEPFLQLAFLPLPVIPHLKISDRGLVDVDKFALIG.

This sequence belongs to the metallo-dependent hydrolases superfamily. Adenine deaminase family. It depends on Mn(2+) as a cofactor.

The catalysed reaction is adenine + H2O + H(+) = hypoxanthine + NH4(+). The sequence is that of Adenine deaminase from Sinorhizobium fredii (strain NBRC 101917 / NGR234).